Consider the following 262-residue polypeptide: MKIALGIEYDGSRYFGWQRQDEVESVQQKLEEALSIVANAPIEVFCAGRTDSGVHGTGQVVHFETQAIRPLQSWCFGTNANLPDDIAVKWAVEVSEDFHARFSATARRYRYIIFNNKLRSAILPKGVSHYHYELDHQKMHEAGQFLLGENDFSSFRAAKCQSHTPWRNVHHLNVSRLGNYIVVDIQANAFVHHMVRNIVGSLIEVGQGRQPVEWIQWLLAQRDRTLAAPTAKAEGLYLVDVHYPERFGIPKTALGPLFLANN.

Asp51 serves as the catalytic Nucleophile. Position 109 (Tyr109) interacts with substrate.

This sequence belongs to the tRNA pseudouridine synthase TruA family. As to quaternary structure, homodimer.

The catalysed reaction is uridine(38/39/40) in tRNA = pseudouridine(38/39/40) in tRNA. In terms of biological role, formation of pseudouridine at positions 38, 39 and 40 in the anticodon stem and loop of transfer RNAs. The sequence is that of tRNA pseudouridine synthase A from Actinobacillus pleuropneumoniae serotype 7 (strain AP76).